The primary structure comprises 266 residues: Proteasome subunit alpha type-1 (266 aa).

It belongs to the peptidase T1A family. The 26S proteasome consists of a 20S proteasome core and two 19S regulatory subunits. The 20S proteasome core is composed of 28 subunits that are arranged in four stacked rings, resulting in a barrel-shaped structure. The two end rings are each formed by seven alpha subunits, and the two central rings are each formed by seven beta subunits. The catalytic chamber with the active sites is on the inside of the barrel.

The protein localises to the cytoplasm. The protein resides in the nucleus. Functionally, the proteasome is a multicatalytic proteinase complex which is characterized by its ability to cleave peptides with Arg, Phe, Tyr, Leu, and Glu adjacent to the leaving group at neutral or slightly basic pH. The proteasome has an ATP-dependent proteolytic activity. The protein is Proteasome subunit alpha type-1 of Trypanosoma brucei brucei.